Reading from the N-terminus, the 82-residue chain is MNQEIFERVKKVVIDQLEVPEDSVVPEASFANDLNADSLDTVELVMALEEEFDIEIPDEEAEKIDTVGKAVEHISEKVEATA.

Residues 3–78 enclose the Carrier domain; that stretch reads QEIFERVKKV…KAVEHISEKV (76 aa). Serine 38 bears the O-(pantetheine 4'-phosphoryl)serine mark.

This sequence belongs to the acyl carrier protein (ACP) family. Post-translationally, 4'-phosphopantetheine is transferred from CoA to a specific serine of apo-ACP by AcpS. This modification is essential for activity because fatty acids are bound in thioester linkage to the sulfhydryl of the prosthetic group.

The protein resides in the cytoplasm. It functions in the pathway lipid metabolism; fatty acid biosynthesis. In terms of biological role, carrier of the growing fatty acid chain in fatty acid biosynthesis. This Gloeothece citriformis (strain PCC 7424) (Cyanothece sp. (strain PCC 7424)) protein is Acyl carrier protein.